A 278-amino-acid polypeptide reads, in one-letter code: Sulfur carrier protein FdhD (278 aa).

Cys-121 serves as the catalytic Cysteine persulfide intermediate. A Mo-bis(molybdopterin guanine dinucleotide)-binding site is contributed by 260-265 (FCKPGR).

Belongs to the FdhD family.

It localises to the cytoplasm. Its function is as follows. Required for formate dehydrogenase (FDH) activity. Acts as a sulfur carrier protein that transfers sulfur from IscS to the molybdenum cofactor prior to its insertion into FDH. The protein is Sulfur carrier protein FdhD of Salmonella schwarzengrund (strain CVM19633).